The primary structure comprises 811 residues: Auxin response factor 8 (811 aa).

Positions 126-228 (FCKTLTASDT…QLFLGIRHAT (103 aa)) form a DNA-binding region, TF-B3. Disordered regions lie at residues 467-496 (HQYL…HLMH) and 544-565 (HLQQ…SDFT). Composition is skewed to polar residues over residues 469–482 (YLQQ…DLML) and 544–555 (HLQQWQQQSEMP). Residues 705-789 (KNFVKVYKSG…WYIKILSPED (85 aa)) enclose the PB1 domain.

It belongs to the ARF family. In terms of assembly, homodimers and heterodimers. Expressed in the whole plant.

It localises to the nucleus. Its function is as follows. Auxin response factors (ARFs) are transcriptional factors that bind specifically to the DNA sequence 5'-TGTCTC-3' found in the auxin-responsive promoter elements (AuxREs). Seems to act as transcriptional activator. Formation of heterodimers with Aux/IAA proteins may alter their ability to modulate early auxin response genes expression. Regulates both stamen and gynoecium maturation. Promotes jasmonic acid production. Partially redundant with ARF6. Involved in fruit initiation. Acts as an inhibitor to stop further carpel development in the absence of fertilization and the generation of signals required to initiate fruit and seed development. The chain is Auxin response factor 8 (ARF8) from Arabidopsis thaliana (Mouse-ear cress).